Consider the following 135-residue polypeptide: Nitrogen fixation protein NifU 1 (135 aa).

Residues 1 to 10 (MRDMQDDDTK) show a composition bias toward basic and acidic residues. Residues 1–29 (MRDMQDDDTKSPAPPPAAAAAARRAAGQA) form a disordered region. Low complexity predominate over residues 18 to 29 (AAAAARRAAGQA).

This sequence belongs to the NifU family.

In terms of biological role, may be involved in the formation or repair of [Fe-S] clusters present in iron-sulfur proteins. This chain is Nitrogen fixation protein NifU 1 (nifU1), found in Rhodobacter capsulatus (Rhodopseudomonas capsulata).